The sequence spans 246 residues: Probable transcriptional regulatory protein ASA_2843 (246 aa).

The protein belongs to the TACO1 family.

It localises to the cytoplasm. This chain is Probable transcriptional regulatory protein ASA_2843, found in Aeromonas salmonicida (strain A449).